Consider the following 78-residue polypeptide: Small ribosomal subunit protein bS18 (78 aa).

Belongs to the bacterial ribosomal protein bS18 family. In terms of assembly, part of the 30S ribosomal subunit. Forms a tight heterodimer with protein bS6.

Functionally, binds as a heterodimer with protein bS6 to the central domain of the 16S rRNA, where it helps stabilize the platform of the 30S subunit. The sequence is that of Small ribosomal subunit protein bS18 from Parafrankia sp. (strain EAN1pec).